We begin with the raw amino-acid sequence, 123 residues long: Large ribosomal subunit protein bL12 (123 aa).

The protein belongs to the bacterial ribosomal protein bL12 family. Homodimer. Part of the ribosomal stalk of the 50S ribosomal subunit. Forms a multimeric L10(L12)X complex, where L10 forms an elongated spine to which 2 to 4 L12 dimers bind in a sequential fashion. Binds GTP-bound translation factors.

Forms part of the ribosomal stalk which helps the ribosome interact with GTP-bound translation factors. Is thus essential for accurate translation. In Chromobacterium violaceum (strain ATCC 12472 / DSM 30191 / JCM 1249 / CCUG 213 / NBRC 12614 / NCIMB 9131 / NCTC 9757 / MK), this protein is Large ribosomal subunit protein bL12.